The primary structure comprises 308 residues: Phenylcoumaran benzylic ether reductase Pyrc5 (308 aa).

NADP(+) is bound by residues 11-17 (GGTGYIG), arginine 36, and lysine 45. Residue lysine 133 is the Proton acceptor of the active site. NADP(+) is bound at residue arginine 137.

It belongs to the NmrA-type oxidoreductase family. Isoflavone reductase subfamily.

It catalyses the reaction (-)-dehydrodiconiferyl alcohol + NADPH + H(+) = (S)-isodihydrodehydrodiconiferyl alcohol + NADP(+). The catalysed reaction is (+)-dehydrodiconiferyl alcohol + NADPH + H(+) = (R)-isodihydrodehydrodiconiferyl alcohol + NADP(+). Functionally, oxidoreductase involved in lignan biosynthesis. Catalyzes the NADPH-dependent reduction of phenylcoumaran benzylic ethers. Converts dehydrodiconiferyl alcohol (DDC) to isodihydrodehydrodiconiferyl alcohol (IDDDC). In Pyrus communis (Pear), this protein is Phenylcoumaran benzylic ether reductase Pyrc5.